The following is a 206-amino-acid chain: LOB domain-containing protein 35 (206 aa).

The LOB domain maps to 4 to 105 (TCCSACKVMK…EQINSAKNEL (102 aa)). A disordered region spans residues 184 to 206 (ASTSGGTSATQKTLPFPQNHNQP).

The protein belongs to the LOB domain-containing protein family.

In Arabidopsis thaliana (Mouse-ear cress), this protein is LOB domain-containing protein 35 (LBD35).